A 429-amino-acid polypeptide reads, in one-letter code: UDP-N-acetylglucosamine 1-carboxyvinyltransferase (429 aa).

Phosphoenolpyruvate is bound at residue 22 to 23 (KN). Arginine 93 contacts UDP-N-acetyl-alpha-D-glucosamine. Catalysis depends on cysteine 117, which acts as the Proton donor. Cysteine 117 carries the 2-(S-cysteinyl)pyruvic acid O-phosphothioketal modification. UDP-N-acetyl-alpha-D-glucosamine contacts are provided by residues 122–126 (RPVDQ), aspartate 313, and isoleucine 335.

Belongs to the EPSP synthase family. MurA subfamily.

It is found in the cytoplasm. It catalyses the reaction phosphoenolpyruvate + UDP-N-acetyl-alpha-D-glucosamine = UDP-N-acetyl-3-O-(1-carboxyvinyl)-alpha-D-glucosamine + phosphate. It participates in cell wall biogenesis; peptidoglycan biosynthesis. Cell wall formation. Adds enolpyruvyl to UDP-N-acetylglucosamine. This Variovorax paradoxus (strain S110) protein is UDP-N-acetylglucosamine 1-carboxyvinyltransferase.